Consider the following 416-residue polypeptide: Lipid II:glycine glycyltransferase (416 aa).

Belongs to the FemABX family.

It is found in the cytoplasm. The enzyme catalyses beta-D-GlcNAc-(1-&gt;4)-Mur2Ac(oyl-L-Ala-D-isoglutaminyl-L-Lys-D-Ala-D-Ala)-di-trans,octa-cis-undecaprenyl diphosphate + glycyl-tRNA(Gly) = beta-D-GlcNAc-(1-&gt;4)-Mur2Ac(oyl-L-Ala-D-isoglutaminyl-L-Lys-(N(6)-Gly)-D-Ala-D-Ala)-di-trans,octa-cis-undecaprenyl diphosphate + tRNA(Gly) + H(+). In terms of biological role, catalyzes the incorporation of amino acid(s) into the interchain peptide bridge of peptidoglycan, using aminoacyl-tRNA as amino acid donor. In Staphylococcus epidermidis (strain ATCC 35984 / DSM 28319 / BCRC 17069 / CCUG 31568 / BM 3577 / RP62A), this protein is Lipid II:glycine glycyltransferase (femX).